The sequence spans 397 residues: Ethanolaminephosphotransferase 1 (397 aa).

At alanine 2 the chain carries N-acetylalanine. 10 consecutive transmembrane segments (helical) span residues 47 to 69 (WLAP…LLMA), 84 to 103 (HVPD…AYTL), 123 to 145 (LFDH…SIFG), 150 to 172 (GVSV…LSHW), 179 to 201 (ILFL…IVTA), 221 to 243 (LFTA…LNFF), 256 to 278 (VYEA…AWIL), 291 to 310 (VFYF…LIVC), 317 to 339 (CPTL…LGVA), and 344 to 366 (SILL…VRVV). A non-standard amino acid (selenocysteine) is located at residue selenocysteine 387.

The protein belongs to the CDP-alcohol phosphatidyltransferase class-I family. The cofactor is Mg(2+). Requires Mn(2+) as cofactor. In terms of tissue distribution, widely expressed. Abundant in brain, placenta, liver and pancreas, followed by heart, skeletal muscle, lung and kidney. In brain it is strongly expressed in cerebellum, followed by the occipital pole and the frontal lobe.

The protein localises to the endoplasmic reticulum membrane. The enzyme catalyses CDP-ethanolamine + a 1,2-diacyl-sn-glycerol = a 1,2-diacyl-sn-glycero-3-phosphoethanolamine + CMP + H(+). It catalyses the reaction 1-O-alkyl-2-acyl-sn-glycerol + CDP-ethanolamine = a 1-O-alkyl-2-acyl-sn-glycero-3-phosphoethanolamine + CMP + H(+). Its pathway is phospholipid metabolism; phosphatidylethanolamine biosynthesis; phosphatidylethanolamine from ethanolamine: step 3/3. Functionally, ethanolaminephosphotransferase that catalyzes the transfer of phosphoethanolamine (PE) from CDP-ethanolamine to lipid acceptors, the final step in the synthesis of PE via the 'Kennedy' pathway. PE is the second most abundant phospholipid of membranes in mammals and is involved in various membrane-related cellular processes. The enzyme is critical for the synthesis of several PE species and also catalyzes the synthesis of plasmanyl-PE, a lipid required for proper myelination and neurodevelopment, from 1-alkyl-2-acylglycerol. The protein is Ethanolaminephosphotransferase 1 of Homo sapiens (Human).